Here is a 268-residue protein sequence, read N- to C-terminus: Protein MGF 300-1L (268 aa).

At 1-175 (MVSLTTCCLK…QTFKTFYAKN (175 aa)) the chain is on the cytoplasmic side. Residues 176–193 (YSLSTLYCIFLAIYYKLY) form a helical membrane-spanning segment. Residues 194-268 (TALRKMVKIY…MYAFSQNDYW (75 aa)) lie on the Extracellular side of the membrane.

It belongs to the asfivirus MGF 300 family.

The protein localises to the host membrane. In terms of biological role, plays a role in virus cell tropism, and may be required for efficient virus replication in macrophages. The chain is Protein MGF 300-1L from Ornithodoros (relapsing fever ticks).